Consider the following 254-residue polypeptide: HLA class II histocompatibility antigen, DQ alpha 1 chain (254 aa).

Residues 1–23 form the signal peptide; that stretch reads MILNKALMLGALALTTVMSPCGG. The segment at 24-119 is alpha-1; the sequence is EDIVADHVAS…EVPEVTVFSK (96 aa). Topologically, residues 24–216 are extracellular; sequence EDIVADHVAS…IPAPMSELTE (193 aa). Residues asparagine 103 and asparagine 143 are each glycosylated (N-linked (GlcNAc...) asparagine). Positions 112 to 204 constitute an Ig-like C1-type domain; that stretch reads PEVTVFSKSP…LDKPLLKHWE (93 aa). The tract at residues 120–203 is alpha-2; sequence SPVTLGQPNI…GLDKPLLKHW (84 aa). Residues cysteine 132 and cysteine 188 are joined by a disulfide bond. Positions 204–216 are connecting peptide; that stretch reads EPEIPAPMSELTE. Residues 217–239 traverse the membrane as a helical segment; that stretch reads TVVCALGLSVGLVGIVVGTVFII. Topologically, residues 240–254 are cytoplasmic; sequence RGLRSVGASRHQGPL.

Belongs to the MHC class II family. In terms of assembly, heterodimer of an alpha and a beta subunit; also referred as MHC class II molecule. In the endoplasmic reticulum (ER) it forms a heterononamer; 3 MHC class II molecules bind to a CD74 homotrimer (also known as invariant chain or HLA class II histocompatibility antigen gamma chain). In the endosomal/lysosomal system; CD74 undergoes sequential degradation by various proteases; leaving a small fragment termed CLIP on each MHC class II molecule. MHC class II molecule interacts with HLA_DM, and HLA_DO in B-cells, in order to release CLIP and facilitate the binding of antigenic peptides.

The protein resides in the cell membrane. It localises to the endoplasmic reticulum membrane. The protein localises to the golgi apparatus. It is found in the trans-Golgi network membrane. Its subcellular location is the endosome membrane. The protein resides in the lysosome membrane. In terms of biological role, binds peptides derived from antigens that access the endocytic route of antigen presenting cells (APC) and presents them on the cell surface for recognition by the CD4 T-cells. The peptide binding cleft accommodates peptides of 10-30 residues. The peptides presented by MHC class II molecules are generated mostly by degradation of proteins that access the endocytic route, where they are processed by lysosomal proteases and other hydrolases. Exogenous antigens that have been endocytosed by the APC are thus readily available for presentation via MHC II molecules, and for this reason this antigen presentation pathway is usually referred to as exogenous. As membrane proteins on their way to degradation in lysosomes as part of their normal turn-over are also contained in the endosomal/lysosomal compartments, exogenous antigens must compete with those derived from endogenous components. Autophagy is also a source of endogenous peptides, autophagosomes constitutively fuse with MHC class II loading compartments. In addition to APCs, other cells of the gastrointestinal tract, such as epithelial cells, express MHC class II molecules and CD74 and act as APCs, which is an unusual trait of the GI tract. To produce a MHC class II molecule that presents an antigen, three MHC class II molecules (heterodimers of an alpha and a beta chain) associate with a CD74 trimer in the ER to form a heterononamer. Soon after the entry of this complex into the endosomal/lysosomal system where antigen processing occurs, CD74 undergoes a sequential degradation by various proteases, including CTSS and CTSL, leaving a small fragment termed CLIP (class-II-associated invariant chain peptide). The removal of CLIP is facilitated by HLA-DM via direct binding to the alpha-beta-CLIP complex so that CLIP is released. HLA-DM stabilizes MHC class II molecules until primary high affinity antigenic peptides are bound. The MHC II molecule bound to a peptide is then transported to the cell membrane surface. In B-cells, the interaction between HLA-DM and MHC class II molecules is regulated by HLA-DO. Primary dendritic cells (DCs) also to express HLA-DO. Lysosomal microenvironment has been implicated in the regulation of antigen loading into MHC II molecules, increased acidification produces increased proteolysis and efficient peptide loading. The protein is HLA class II histocompatibility antigen, DQ alpha 1 chain (HLA-DQA1) of Homo sapiens (Human).